A 388-amino-acid polypeptide reads, in one-letter code: tRNA-specific adenosine deaminase 1 (388 aa).

Positions Cys63–Ile388 constitute an A to I editase domain. His89 lines the Zn(2+) pocket. The active-site Proton donor is Glu91. Arg96 contacts 1D-myo-inositol hexakisphosphate. Positions 144 and 201 each coordinate Zn(2+). The 1D-myo-inositol hexakisphosphate site is built by Lys204, Lys357, and Arg363.

It belongs to the ADAT1 family. 1D-myo-inositol hexakisphosphate is required as a cofactor. Zn(2+) serves as cofactor.

The protein resides in the cytoplasm. The protein localises to the nucleus. The catalysed reaction is adenosine(37) in tRNA(Ala) + H2O + H(+) = inosine(37) in tRNA(Ala) + NH4(+). In terms of biological role, deaminates adenosine-37 to inosine in tRNA-Ala. This is tRNA-specific adenosine deaminase 1 from Schizosaccharomyces pombe (strain 972 / ATCC 24843) (Fission yeast).